A 156-amino-acid chain; its full sequence is Flagellar assembly factor FliW (156 aa).

It belongs to the FliW family. In terms of assembly, interacts with translational regulator CsrA and flagellin(s).

Its subcellular location is the cytoplasm. In terms of biological role, acts as an anti-CsrA protein, binds CsrA and prevents it from repressing translation of its target genes, one of which is flagellin. Binds to flagellin and participates in the assembly of the flagellum. This Lachnoclostridium phytofermentans (strain ATCC 700394 / DSM 18823 / ISDg) (Clostridium phytofermentans) protein is Flagellar assembly factor FliW.